The primary structure comprises 189 residues: MQIWAGLGNPGPKYALHRHNVGFMACDVIAEMHGFEPVQKKFQGWVQEGRIGSEKVLLLKPGTFMNESGRAIGEAMRFYKLEPQDVTVFYDELDLEPFKIKVKRGGGAAGHNGIRSTIRHIGEDFRRIRIGIGHPGHKDRVTGHVLGNYAKAEQDDLVQMLGAIGAEAEWLAKGDDARFMSDIALRLQA.

Tyr14 contacts tRNA. His19 acts as the Proton acceptor in catalysis. The tRNA site is built by Phe64, Asn66, and Asn112.

This sequence belongs to the PTH family. As to quaternary structure, monomer.

The protein resides in the cytoplasm. It carries out the reaction an N-acyl-L-alpha-aminoacyl-tRNA + H2O = an N-acyl-L-amino acid + a tRNA + H(+). In terms of biological role, hydrolyzes ribosome-free peptidyl-tRNAs (with 1 or more amino acids incorporated), which drop off the ribosome during protein synthesis, or as a result of ribosome stalling. Functionally, catalyzes the release of premature peptidyl moieties from peptidyl-tRNA molecules trapped in stalled 50S ribosomal subunits, and thus maintains levels of free tRNAs and 50S ribosomes. In Erythrobacter litoralis (strain HTCC2594), this protein is Peptidyl-tRNA hydrolase.